The chain runs to 291 residues: 33 kDa chaperonin (291 aa).

2 disulfides stabilise this stretch: Cys-235/Cys-237 and Cys-268/Cys-271.

It belongs to the HSP33 family. In terms of processing, under oxidizing conditions two disulfide bonds are formed involving the reactive cysteines. Under reducing conditions zinc is bound to the reactive cysteines and the protein is inactive.

The protein resides in the cytoplasm. Functionally, redox regulated molecular chaperone. Protects both thermally unfolding and oxidatively damaged proteins from irreversible aggregation. Plays an important role in the bacterial defense system toward oxidative stress. The protein is 33 kDa chaperonin of Streptococcus agalactiae serotype III (strain NEM316).